We begin with the raw amino-acid sequence, 460 residues long: CWF19-like protein 2 homolog (460 aa).

Disordered regions lie at residues 38–78 (GKTF…EDEK), 103–175 (KLES…TGTA), and 193–227 (RRHD…ESIK). Over residues 54–68 (GSQQVRNDVMKSSDS) the composition is skewed to polar residues. Residues 84–106 (KILKAEMKGDTDLVKKLKRKLES) are a coiled coil. Composition is skewed to basic and acidic residues over residues 113-131 (EPPK…DREG), 139-172 (RRSD…EEKT), and 205-227 (EMQK…ESIK). Residues 210 to 231 (KKKSDEKDKKRKEKESIKEHKR) are a coiled coil.

Belongs to the CWF19 family.

The chain is CWF19-like protein 2 homolog from Caenorhabditis elegans.